Consider the following 447-residue polypeptide: MTRKYFGTDGVRGRVGDAPITPDFVMRLGHAAGKVLALGQKTSQGKPTVLIGKDTRISGYMLEAALEAGFTAAGVNVLLTGPLPTPGIAYLTRTLRLAAGVVISASHNPYYDNGIKFFSASGDKLPDDVESQIEAMVEEPMTCVHSDELGRARRIDDAAGRYIEFCKSTFPYEHDLHGLKIVVDCANGAAYHIAPHVFHELGAEVISIGNQPNGRNINAGYGATAPEKLIEAVKANGADLGLAFDGDADRLQVVDADGRLYNGDELLYLIVRDRQASGQRVEGAVGTLMTNMAVELALKRLGVSFVRAKVGDRYVLEELNRHHWQLGGEGSGHLLCLDRHTTGDGIVSALQVLAALRRSGKTLPQLLDGVSLFPQTLINVRVEKGFDWQNHAGLKAVRDRVEPELEGRGRVLIRASGTEPVVRVMVEAEQVETAERAAQELAAALRA.

Residue Ser-106 is the Phosphoserine intermediate of the active site. Ser-106, Asp-245, Asp-247, and Asp-249 together coordinate Mg(2+). A Phosphoserine modification is found at Ser-106.

It belongs to the phosphohexose mutase family. Mg(2+) is required as a cofactor. Post-translationally, activated by phosphorylation.

The catalysed reaction is alpha-D-glucosamine 1-phosphate = D-glucosamine 6-phosphate. Functionally, catalyzes the conversion of glucosamine-6-phosphate to glucosamine-1-phosphate. In Cupriavidus metallidurans (strain ATCC 43123 / DSM 2839 / NBRC 102507 / CH34) (Ralstonia metallidurans), this protein is Phosphoglucosamine mutase.